The primary structure comprises 265 residues: Hydroxyethylthiazole kinase (265 aa).

Residue Met50 coordinates substrate. ATP is bound by residues Arg125 and Thr171. Gly198 provides a ligand contact to substrate.

Belongs to the Thz kinase family. Mg(2+) is required as a cofactor.

It catalyses the reaction 5-(2-hydroxyethyl)-4-methylthiazole + ATP = 4-methyl-5-(2-phosphooxyethyl)-thiazole + ADP + H(+). It functions in the pathway cofactor biosynthesis; thiamine diphosphate biosynthesis; 4-methyl-5-(2-phosphoethyl)-thiazole from 5-(2-hydroxyethyl)-4-methylthiazole: step 1/1. Its function is as follows. Catalyzes the phosphorylation of the hydroxyl group of 4-methyl-5-beta-hydroxyethylthiazole (THZ). The chain is Hydroxyethylthiazole kinase from Salmonella arizonae (strain ATCC BAA-731 / CDC346-86 / RSK2980).